Reading from the N-terminus, the 179-residue chain is Segregation and condensation protein B (179 aa).

It belongs to the ScpB family. Homodimer. Homodimerization may be required to stabilize the binding of ScpA to the Smc head domains. Component of a cohesin-like complex composed of ScpA, ScpB and the Smc homodimer, in which ScpA and ScpB bind to the head domain of Smc. The presence of the three proteins is required for the association of the complex with DNA.

It is found in the cytoplasm. In terms of biological role, participates in chromosomal partition during cell division. May act via the formation of a condensin-like complex containing Smc and ScpA that pull DNA away from mid-cell into both cell halves. This Streptococcus equi subsp. zooepidemicus (strain H70) protein is Segregation and condensation protein B.